Reading from the N-terminus, the 1001-residue chain is TonB-dependent receptor P3 (1001 aa).

A signal peptide spans 1-26 (MTTKNNKQLKSVLFMFLLLIGAYVKA). The TonB box signature appears at 109 to 116 (EEIVVIGY). In terms of domain architecture, TBDR plug spans 120-232 (KKSDVSGSVS…ANGVIMVTTK (113 aa)). A TBDR beta-barrel domain is found at 238–1001 (KPTLELNTSY…TFTMGLNMKF (764 aa)). The short motif at 984-1001 (YGSYPNVRTFTMGLNMKF) is the TonB C-terminal box element.

This sequence belongs to the TonB-dependent receptor family.

The protein localises to the cell outer membrane. Its function is as follows. TonB-dependent receptor probably involved in ulvan degradation. Ulvan is the main polysaccharide component of the Ulvales (green seaweed) cell wall. It is composed of disaccharide building blocks comprising 3-sulfated rhamnose (Rha3S) linked to D-glucuronic acid (GlcA), L-iduronic acid (IduA), or D-xylose (Xyl). The TonB-dependent receptor may mediate transport of ulvan oligosaccharides from the surface of the outer membrane to the periplasm for subsequent degradation. This chain is TonB-dependent receptor P3, found in Formosa agariphila (strain DSM 15362 / KCTC 12365 / LMG 23005 / KMM 3901 / M-2Alg 35-1).